The following is a 347-amino-acid chain: Aromatic amino acid aminotransferase (347 aa).

At Lys214 the chain carries N6-(pyridoxal phosphate)lysine.

This sequence belongs to the class-II pyridoxal-phosphate-dependent aminotransferase family. In terms of assembly, homodimer. Pyridoxal 5'-phosphate serves as cofactor.

The enzyme catalyses an aromatic L-alpha-amino acid + 2-oxoglutarate = an aromatic oxo-acid + L-glutamate. Aminotransferase that catalyzes the conversion of aromatic amino acids and 2-oxoglutarate into corresponding aromatic oxo acids and L-glutamate. This is Aromatic amino acid aminotransferase from Mycobacteroides abscessus (strain ATCC 19977 / DSM 44196 / CCUG 20993 / CIP 104536 / JCM 13569 / NCTC 13031 / TMC 1543 / L948) (Mycobacterium abscessus).